We begin with the raw amino-acid sequence, 240 residues long: Membrane-spanning 4-domains subfamily A member 7 (240 aa).

The Cytoplasmic portion of the chain corresponds to 1–47; the sequence is MLLQSQTMGVSHSFTPKGITIPQREKPGHMYQNEDYLQNGLPTETTV. Residues 48 to 68 form a helical membrane-spanning segment; it reads LGTVQILCCLLISSLGAILVF. Over 69 to 83 the chain is Extracellular; it reads APYPSHFNPAISTTL. The helical transmembrane segment at 84 to 104 threads the bilayer; that stretch reads MSGYPFLGALCFGITGSLSII. Residues 105-121 lie on the Cytoplasmic side of the membrane; the sequence is SGKQSTKPFDLSSLTSN. Residues 122–142 form a helical membrane-spanning segment; it reads AVSSVTAGAGLFLLADSMVAL. Residues 143–178 are Extracellular-facing; the sequence is RTASQHCGSEMDYLSSLPYSEYYYPIYEIKDCLLTS. Residues 179–199 form a helical membrane-spanning segment; that stretch reads VSLTGVLVVMLIFTVLELLLA. The Cytoplasmic portion of the chain corresponds to 200–240; that stretch reads AYSSVFWWKQLYSNNPGSSFSSTQSQDHIQQVKKSSSRSWI. The tract at residues 218 to 240 is disordered; it reads SFSSTQSQDHIQQVKKSSSRSWI.

Belongs to the MS4A family. In terms of tissue distribution, ubiquitous expression in normal tissues. Expression is more elevated in adult liver, lung, spleen, and heart than in their fetal counterparts, and is higher in normal tissues than in the cancerous tissue or cell lines. Low levels of expression were detected in the promonocytic stage, whereas high levels of expression were detected in mature monocytes.

It is found in the membrane. May be involved in signal transduction as a component of a multimeric receptor complex. In Homo sapiens (Human), this protein is Membrane-spanning 4-domains subfamily A member 7 (MS4A7).